Consider the following 214-residue polypeptide: Octanoyltransferase (214 aa).

The BPL/LPL catalytic domain maps to 31 to 206 (KDDADEIWLL…QLAEQLGYNY (176 aa)). Residues 70-77 (RGGQVTYH), 137-139 (SLG), and 150-152 (GLA) each bind substrate. The Acyl-thioester intermediate role is filled by Cys168.

The protein belongs to the LipB family.

The protein localises to the cytoplasm. It catalyses the reaction octanoyl-[ACP] + L-lysyl-[protein] = N(6)-octanoyl-L-lysyl-[protein] + holo-[ACP] + H(+). It participates in protein modification; protein lipoylation via endogenous pathway; protein N(6)-(lipoyl)lysine from octanoyl-[acyl-carrier-protein]: step 1/2. Functionally, catalyzes the transfer of endogenously produced octanoic acid from octanoyl-acyl-carrier-protein onto the lipoyl domains of lipoate-dependent enzymes. Lipoyl-ACP can also act as a substrate although octanoyl-ACP is likely to be the physiological substrate. The protein is Octanoyltransferase of Marinomonas sp. (strain MWYL1).